Here is a 908-residue protein sequence, read N- to C-terminus: Glutamate receptor ionotropic, kainate 2 (908 aa).

Positions 1-31 (MKIISPVLSNLVFSRSIKVLLCLLWIGYSQG) are cleaved as a signal peptide. Residues 32–561 (TTHVLRFGGI…VFSFLNPLSP (530 aa)) are Extracellular-facing. 7 N-linked (GlcNAc...) asparagine glycosylation sites follow: asparagine 67, asparagine 73, asparagine 275, asparagine 378, asparagine 412, asparagine 423, and asparagine 430. An intrachain disulfide couples cysteine 96 to cysteine 347. L-glutamate is bound by residues proline 516, alanine 518, and arginine 523. Asparagine 546 carries an N-linked (GlcNAc...) asparagine glycan. A helical transmembrane segment spans residues 562 to 582 (DIWMYILLAYLGVSCVLFVIA). Topologically, residues 583–638 (RFSPYEWYNPHPCNPDSDVVENNFTLLNSFWFGVGALMQQGSELMPKALSTRIVGG) are cytoplasmic. A helical membrane pass occupies residues 639 to 659 (IWWFFTLIIISSYTANLAAFL). Residues 660–819 (TVERMESPID…KEASALGVQN (160 aa)) are Extracellular-facing. Residues alanine 689, threonine 690, and glutamate 738 each contribute to the L-glutamate site. Cysteine 750 and cysteine 804 are disulfide-bonded. A glycan (N-linked (GlcNAc...) asparagine) is linked at asparagine 751. Residues 820–840 (IGGIFIVLAAGLVLSVFVAVG) form a helical membrane-spanning segment. The Cytoplasmic portion of the chain corresponds to 841–908 (EFLYKSKKNA…RRLPGKETMA (68 aa)). Serine 846 and serine 868 each carry phosphoserine; by PKC. A Glycyl lysine isopeptide (Lys-Gly) (interchain with G-Cter in SUMO1) cross-link involves residue lysine 886.

The protein belongs to the glutamate-gated ion channel (TC 1.A.10.1) family. GRIK2 subfamily. Homotetramer and heterotetramer with GRIK5. Tetramers may be formed by the dimerization of dimers. Assembles into a kainate-gated homomeric channel that does not bind AMPA. Can form functional heteromeric receptors with GRIK3. Forms a heteromeric complex with GRIK4 and GRIK5. Interacts with DLG4. Interacts (via C-terminus) with KLHL17 (via kelch repeats); the interaction targets GRIK2 for degradation via ubiquitin-proteasome pathway. Interacts with NETO2. Post-translationally, sumoylation mediates kainate receptor-mediated endocytosis and regulates synaptic transmission. Sumoylation is enhanced by PIAS3 and desumoylated by SENP1. In terms of processing, ubiquitinated. Ubiquitination regulates the GRIK2 levels at the synapse by leading kainate receptor degradation through proteasome. Phosphorylated by PKC at Ser-868 upon agonist activation, this directly enhance sumoylation. Expressed in the hippocampal mossy fiber synapses (at protein level). Most abundant in the cerebellum and the hypothalamus. Expressed in a proportion of dorsal root ganglion (DRG) neurons (13.6%); predominantly small diameter DRG neurons (75%) with the remainder expressed in medium diameter DRG neurons.

Its subcellular location is the cell membrane. It is found in the postsynaptic cell membrane. It catalyses the reaction Ca(2+)(in) = Ca(2+)(out). It carries out the reaction Na(+)(in) = Na(+)(out). Its activity is regulated as follows. Cold receptor activity activated by temperatures between 10-19 degrees Celsius. Ionotropic glutamate receptor that functions as a cation-permeable ligand-gated ion channel, gated by L-glutamate and the glutamatergic agonist kainic acid. L-glutamate acts as an excitatory neurotransmitter at many synapses in the central nervous system. Binding of the excitatory neurotransmitter L-glutamate induces a conformation change, leading to the opening of the cation channel, and thereby converts the chemical signal to an electrical impulse. The receptor then desensitizes rapidly and enters a transient inactive state, characterized by the presence of bound agonist. Modulates cell surface expression of NETO2. In association with GRIK3, involved in presynaptic facilitation of glutamate release at hippocampal mossy fiber synapses. Its function is as follows. Independent of its ionotropic glutamate receptor activity, acts as a thermoreceptor conferring sensitivity to cold temperatures. Functions in dorsal root ganglion neurons. In terms of biological role, ionotropic glutamate receptor that functions as a cation-permeable ligand-gated ion channel, gated by L-glutamate and the glutamatergic agonist kainic acid. This chain is Glutamate receptor ionotropic, kainate 2 (Grik2), found in Mus musculus (Mouse).